Reading from the N-terminus, the 425-residue chain is Protein cab-1 (425 aa).

Basic and acidic residues predominate over residues 1–11; it reads MRYTFSDEKKA. Disordered stretches follow at residues 1-20 and 214-251; these read MRYTFSDEKKATTTTTSRAK and LKKTQEKLSEQTPSAKANVESLESAMQTATGEPQVPQK. The interval 205–424 is AEX-3-binding; sequence ENEIAKESEL…EVCNPNFAAQ (220 aa). Residues 300 to 320 form a helical membrane-spanning segment; it reads LLLLAVGTVMCVGLIGTVAGG. The tract at residues 334–355 is disordered; that stretch reads DDGEYAPYAGTGPGFRKNKGNK.

The protein belongs to the NPDC1/cab-1 family. Binds to the RAB3 GDP/GTP exchange factor aex-3. In terms of tissue distribution, expressed in a variety of neurons.

It is found in the membrane. The protein is Protein cab-1 (cab-1) of Caenorhabditis elegans.